The chain runs to 342 residues: Ketoreductase nvfG (342 aa).

It belongs to the NAD(P)-dependent epimerase/dehydratase family. Dihydroflavonol-4-reductase subfamily.

It participates in secondary metabolite biosynthesis; terpenoid biosynthesis. Its function is as follows. Ketoreductase; part of the gene cluster that mediates the biosynthesis of novofumigatonin, a heavily oxygenated meroterpenoid containing a unique orthoester moiety. The first step of the pathway is the synthesis of 3,5-dimethylorsellinic acid (DMOA) by the polyketide synthase nvfA via condensation of one acetyl-CoA starter unit with 3 malonyl-CoA units and 2 methylations. DMOA is then converted to farnesyl-DMOA by the farnesyltransferase nvfB. Epoxydation by FAD-dependent monooxygenase nvfK, followed by a protonation-initiated cyclization catalyzed by the terpene cyclase nvfL leads to the production of asnavolin H. The short chain dehydrogenase nvfC then as a 3-OH dehydrogenase of asnovolin H to yield chemesin D. There are two branches to synthesize asnovolin A from chemesin D. In one branch, chemesin D undergoes Baeyer-Villiger oxidation by nvfH, methylation by nvfJ, and enoyl reduction by the nvfM D enoylreductase that reduces the double bond between C-5'and C-6', to form respectively asnovolin I, asnovolin K, and asnovolin A. In the other branch, the methylation precedes the Baeyer-Villiger oxidation and the enoyl reduction to yield asnovolin A via the asnovolin J intermediate. Asnovolin A is further converted to fumigatonoid A by the Fe(II)/2-oxoglutarate-dependent dioxygenase nvfI that catalyzes an endoperoxidation reaction. The alpha/beta hydrolase nvfD then acts as an epimerase that converts fumigatonoid A to its C-5' epimer, which then undergoes spontaneous or nvfD-catalyzed lactonization. The following step utilizes the ketoreductase nvfG to produce fumigatonoid B. The dioxygenase nvfE further converts fumigatonoid B into fumigatonoid C. Finally the Fe(II)/2-oxoglutarate-dependent dioxygenase nvfF catalyzes two rounds of oxidation to transform fumigatonoid C into the end product, novofumigatonin A. This is Ketoreductase nvfG from Aspergillus novofumigatus (strain IBT 16806).